Consider the following 132-residue polypeptide: Ribosome-binding factor A (132 aa).

Belongs to the RbfA family. As to quaternary structure, monomer. Binds 30S ribosomal subunits, but not 50S ribosomal subunits or 70S ribosomes.

The protein localises to the cytoplasm. In terms of biological role, one of several proteins that assist in the late maturation steps of the functional core of the 30S ribosomal subunit. Associates with free 30S ribosomal subunits (but not with 30S subunits that are part of 70S ribosomes or polysomes). Required for efficient processing of 16S rRNA. May interact with the 5'-terminal helix region of 16S rRNA. The polypeptide is Ribosome-binding factor A (Teredinibacter turnerae (strain ATCC 39867 / T7901)).